A 121-amino-acid chain; its full sequence is Holo-[acyl-carrier-protein] synthase (121 aa).

Mg(2+) contacts are provided by Asp-8 and Glu-55.

The protein belongs to the P-Pant transferase superfamily. AcpS family. Mg(2+) is required as a cofactor.

The protein resides in the cytoplasm. It catalyses the reaction apo-[ACP] + CoA = holo-[ACP] + adenosine 3',5'-bisphosphate + H(+). Functionally, transfers the 4'-phosphopantetheine moiety from coenzyme A to a Ser of acyl-carrier-protein. This Caldicellulosiruptor bescii (strain ATCC BAA-1888 / DSM 6725 / KCTC 15123 / Z-1320) (Anaerocellum thermophilum) protein is Holo-[acyl-carrier-protein] synthase.